The following is an 873-amino-acid chain: Alanine--tRNA ligase (873 aa).

The Zn(2+) site is built by His-559, His-563, Cys-661, and His-665.

This sequence belongs to the class-II aminoacyl-tRNA synthetase family. Zn(2+) serves as cofactor.

It localises to the cytoplasm. It catalyses the reaction tRNA(Ala) + L-alanine + ATP = L-alanyl-tRNA(Ala) + AMP + diphosphate. Its function is as follows. Catalyzes the attachment of alanine to tRNA(Ala) in a two-step reaction: alanine is first activated by ATP to form Ala-AMP and then transferred to the acceptor end of tRNA(Ala). Also edits incorrectly charged Ser-tRNA(Ala) and Gly-tRNA(Ala) via its editing domain. The polypeptide is Alanine--tRNA ligase (Acaryochloris marina (strain MBIC 11017)).